Here is a 304-residue protein sequence, read N- to C-terminus: Non-specific ribonucleoside hydrolase RihC (304 aa).

Residue H235 is part of the active site.

Belongs to the IUNH family. RihC subfamily.

Hydrolyzes both purine and pyrimidine ribonucleosides with a broad-substrate specificity. The chain is Non-specific ribonucleoside hydrolase RihC from Salmonella paratyphi A (strain ATCC 9150 / SARB42).